The primary structure comprises 89 residues: Small ribosomal subunit protein uS15 (89 aa).

It belongs to the universal ribosomal protein uS15 family. As to quaternary structure, part of the 30S ribosomal subunit. Forms a bridge to the 50S subunit in the 70S ribosome, contacting the 23S rRNA.

In terms of biological role, one of the primary rRNA binding proteins, it binds directly to 16S rRNA where it helps nucleate assembly of the platform of the 30S subunit by binding and bridging several RNA helices of the 16S rRNA. Its function is as follows. Forms an intersubunit bridge (bridge B4) with the 23S rRNA of the 50S subunit in the ribosome. This Chlamydia caviae (strain ATCC VR-813 / DSM 19441 / 03DC25 / GPIC) (Chlamydophila caviae) protein is Small ribosomal subunit protein uS15.